A 232-amino-acid polypeptide reads, in one-letter code: Dof zinc finger protein DOF4.3 (232 aa).

The Dof-type zinc-finger motif lies at 25 to 79 (RVCARCDSDNTKFCYYNNYSEFQPRYFCKNCRRYWTHGGALRNVPIGGSSRAKRT). The Zn(2+) site is built by Cys27, Cys30, Cys52, and Cys55.

It localises to the nucleus. Its function is as follows. Transcription factor that binds specifically to a 5'-AA[AG]G-3' consensus core sequence. In Arabidopsis thaliana (Mouse-ear cress), this protein is Dof zinc finger protein DOF4.3 (DOF4.3).